Consider the following 135-residue polypeptide: Calcium-binding protein KIC (135 aa).

One can recognise an EF-hand domain in the interval 74 to 109 (MSKEDAQGMVREGDLDGDGALNQTEFCVLMVRLSPE). Ca(2+) is bound by residues Asp-87, Asp-89, Asp-91, and Glu-98.

Interacts with KCBP (via C-terminus). KIC and calmodulin show competitive binding to KCBP. Interacts with CML42. Binds to ABCG36. In terms of tissue distribution, expressed in stems, leaves and flowers.

Functionally, calcium-binding regulatory protein that interacts with kinesin motor protein KCBP in a calcium-dependent manner. Inhibits KCBP microtubule binding activity and microtubule-stimulated ATPase activity. Involved in the regulation of trichome branching through its interaction with KCBP. The protein is Calcium-binding protein KIC of Arabidopsis thaliana (Mouse-ear cress).